Here is a 26-residue protein sequence, read N- to C-terminus: Omega-conotoxin TVIA (26 aa).

3 disulfide bridges follow: Cys-1-Cys-16, Cys-8-Cys-19, and Cys-15-Cys-26. Pro-4, Pro-10, and Pro-21 each carry 4-hydroxyproline.

The protein belongs to the conotoxin O1 superfamily. In terms of tissue distribution, expressed by the venom duct.

The protein localises to the secreted. Functionally, omega-conotoxins act at presynaptic membranes, they bind and block voltage-gated calcium channels (Cav). The polypeptide is Omega-conotoxin TVIA (Conus tulipa (Fish-hunting cone snail)).